Reading from the N-terminus, the 1307-residue chain is Cyclic nucleotide-gated channel beta-1 (1307 aa).

Disordered stretches follow at residues Met-1–Ala-101, Gln-126–Ser-178, Leu-193–Pro-262, Asp-320–Cys-458, Leu-470–Ser-625, and Glu-648–Glu-681. Residues Met-1–Tyr-720 are Cytoplasmic-facing. Residues Val-43–Ala-59 show a composition bias toward acidic residues. Residues Gly-165–Asp-174 are compositionally biased toward basic and acidic residues. A compositionally biased stretch (acidic residues) spans Gln-361–Arg-386. Residues Glu-387–Lys-406 are compositionally biased toward basic and acidic residues. Composition is skewed to acidic residues over residues Glu-407–Pro-451 and Leu-483–Glu-518. Positions Thr-550–Ser-560 are enriched in pro residues. Residues Ala-621–Arg-631 form a calmodulin-binding CaM1 region. Residues Ile-721–Trp-742 form a helical membrane-spanning segment. Topologically, residues Ala-743–Asn-751 are extracellular. Residues Ile-752–Phe-773 form a helical membrane-spanning segment. Over Gln-774–Asp-788 the chain is Cytoplasmic. A helical membrane pass occupies residues Lys-789–Cys-808. Topologically, residues Leu-809–Leu-824 are extracellular. The chain crosses the membrane as a helical span at residues Leu-825–Phe-837. Residues Glu-838–Lys-849 are Cytoplasmic-facing. The chain crosses the membrane as a helical span at residues Ala-850 to Leu-872. The tract at residues Ala-850–Ala-949 is ion conduction pathway. Residues Tyr-873–Ser-895 are Extracellular-facing. 2 helical membrane passes run Tyr-896–Ile-922 and Val-923–Gly-948. Residues Ala-949–Glu-1307 are Cytoplasmic-facing. The tract at residues Ala-952–Gln-1028 is C-linker. The segment at Leu-1026–Leu-1130 is cNMP-binding domain. Residues Arg-1032–Leu-1148 form a cyclic nucleotide-binding domain region. Gly-1093, Glu-1094, Ser-1096, Arg-1106, and Thr-1107 together coordinate 3',5'-cyclic GMP. A 3',5'-cyclic AMP-binding site is contributed by Arg-1106. Residues Gln-1212 to Gln-1218 form a calmodulin-binding CaM2 region. Over residues Gln-1214 to Ala-1238 the composition is skewed to low complexity. The segment at Gln-1214–Glu-1307 is disordered. Over residues Glu-1250–Ser-1261 the composition is skewed to pro residues.

The protein belongs to the cyclic nucleotide-gated cation channel (TC 1.A.1.5) family. CNGB1 subfamily. The rod cyclic nucleotide-gated channel is a heterotetramer composed of CNGA1 and CNGB1 subunits with 3:1 stoichiometry. CNGA1:CNGB1 channel binds Ca(2+)-bound CALM1 via CaM1 and CaM2 regions of the CNGB1 subunit; this interaction modulates the affinity of the channel for cNMPs in response to intracellular Ca(2+) levels. As to quaternary structure, the olfactory cyclic nucleotide-gated channel is a heterotetramer composed of CNGA2, CNGA4 and CNGB1b subunits with 2:1:1 stoichiometry. As to expression, expressed in olfactory sensory cilia (at protein level).

The protein resides in the cell projection. Its subcellular location is the cilium membrane. The catalysed reaction is Ca(2+)(in) = Ca(2+)(out). It catalyses the reaction Na(+)(in) = Na(+)(out). The enzyme catalyses K(+)(in) = K(+)(out). It carries out the reaction NH4(+)(in) = NH4(+)(out). The catalysed reaction is Rb(+)(in) = Rb(+)(out). It catalyses the reaction Li(+)(in) = Li(+)(out). The enzyme catalyses Cs(+)(in) = Cs(+)(out). Functionally, pore-forming subunit of the rod cyclic nucleotide-gated channel. Mediates rod photoresponses at dim light converting transient changes in intracellular cGMP levels into electrical signals. In the dark, cGMP levels are high and keep the channel open enabling a steady inward current carried by Na(+) and Ca(2+) ions that leads to membrane depolarization and neurotransmitter release from synaptic terminals. Upon photon absorption cGMP levels decline leading to channel closure and membrane hyperpolarization that ultimately slows neurotransmitter release and signals the presence of light, the end point of the phototransduction cascade. Conducts cGMP- and cAMP-gated ion currents, with permeability for monovalent and divalent cations. The selectivity for Ca(2+) over Na(+) increases with cGMP concentrations, whereas the selectivity among monovalent ions is independent of the cGMP levels. In terms of biological role, pore-forming subunit of the olfactory cyclic nucleotide-gated channel. Operates in the cilia of olfactory sensory neurons where chemical stimulation of the odorant is converted to an electrical signal. Mediates odorant-induced cAMP-dependent Ca(2+) influx triggering neuron depolarization. The rise of intracellular Ca(2+) levels potentiates the olfactory response by activating Ca(2+)-dependent Cl(-) channels, but it also serves as a negative feedback signal to desensitize the channel for rapid adaptation to odorants. This Rattus norvegicus (Rat) protein is Cyclic nucleotide-gated channel beta-1.